A 640-amino-acid polypeptide reads, in one-letter code: Phosphatidylinositol-binding clathrin assembly protein (640 aa).

Residue Ser2 is modified to N-acetylserine. The ENTH domain maps to 14–145 (QHSVTGSAVS…VSYRQVAFDF (132 aa)). Phosphoserine is present on residues Ser16 and Ser20. Residues 221–294 (KYFDMKKNQC…LEGKKIKDST (74 aa)) are interaction with PIMREG. Lys238 is covalently cross-linked (Glycyl lysine isopeptide (Lys-Gly) (interchain with G-Cter in SUMO2)). A phosphoserine mark is found at Ser303 and Ser315. Residues 543-568 (NGTTKNDVSCSQPGEKKLTGGSNWQP) are disordered. The span at 544–554 (GTTKNDVSCSQ) shows a compositional bias: polar residues.

The protein belongs to the PICALM/SNAP91 family. In terms of assembly, binds to clathrin; involves primarily the C-terminal sequences, but the full-length protein is required for full binding capacity. Binds phosphatidylinositol 4,5- bisphosphate. Interacts with PIMREG; this interaction may change the subcellular location into the nucleus. Interacts with AP2A1 (via its alpha-appendage domain). Interacts (via N-terminus) with VAMP2; VAMP3; VAMP7 and VAMP8 (Via N-terminus). Interacts with LC3/MAP1LC3A. Isoform 2 was found in most tissues examined. Isoform 1 has an overlapping expression pattern but is absent from lung, heart and pancreas. Both isoforms are widely expressed in the brain, higher levels are seen in hippocampus, dentate gyrus, medial habenula nucleus and cerebellar granule cells.

It localises to the cell membrane. It is found in the membrane. The protein localises to the clathrin-coated pit. Its subcellular location is the golgi apparatus. The protein resides in the cytoplasmic vesicle. It localises to the clathrin-coated vesicle. It is found in the nucleus. In terms of biological role, cytoplasmic adapter protein that plays a critical role in clathrin-mediated endocytosis which is important in processes such as internalization of cell receptors, synaptic transmission or removal of apoptotic cells. Recruits AP-2 and attaches clathrin triskelions to the cytoplasmic side of plasma membrane leading to clathrin-coated vesicles (CCVs) assembly. Furthermore, regulates clathrin-coated vesicle size and maturation by directly sensing and driving membrane curvature. In addition to binding to clathrin, mediates the endocytosis of small R-SNARES (Soluble NSF Attachment Protein REceptors) between plasma membranes and endosomes including VAMP2, VAMP3, VAMP4, VAMP7 or VAMP8. In turn, PICALM-dependent SNARE endocytosis is required for the formation and maturation of autophagic precursors. Modulates thereby autophagy and the turnover of autophagy substrates such as MAPT/TAU or amyloid precursor protein cleaved C-terminal fragment (APP-CTF). This is Phosphatidylinositol-binding clathrin assembly protein (Picalm) from Rattus norvegicus (Rat).